The chain runs to 44 residues: MTTRKSAEVITYPIFTVRWVSIHALAVPTIFFLGSITAMQFIQR.

The chain crosses the membrane as a helical span at residues 19–35 (WVSIHALAVPTIFFLGS). Position 23 (His23) interacts with heme.

The protein belongs to the PsbE/PsbF family. Heterodimer of an alpha subunit and a beta subunit. PSII is composed of 1 copy each of membrane proteins PsbA, PsbB, PsbC, PsbD, PsbE, PsbF, PsbH, PsbI, PsbJ, PsbK, PsbL, PsbM, PsbT, PsbX, PsbY, PsbZ, Psb30/Ycf12, at least 3 peripheral proteins of the oxygen-evolving complex and a large number of cofactors. It forms dimeric complexes. Heme b is required as a cofactor.

It is found in the plastid. The protein resides in the chloroplast thylakoid membrane. In terms of biological role, this b-type cytochrome is tightly associated with the reaction center of photosystem II (PSII). PSII is a light-driven water:plastoquinone oxidoreductase that uses light energy to abstract electrons from H(2)O, generating O(2) and a proton gradient subsequently used for ATP formation. It consists of a core antenna complex that captures photons, and an electron transfer chain that converts photonic excitation into a charge separation. The chain is Cytochrome b559 subunit beta from Chlamydomonas moewusii (Chlamydomonas eugametos).